The primary structure comprises 554 residues: MAYYRTPHDVTALPAWQALQQHRDAMQGFSMREAFAADAQRFDQFSLSCCGLFLDYSKNLITEQSRDLLVNLANEVGLQDAIKSMFAGEIINASEGRPVLHTALRRPVGDKLSVNGVNVMPEVHKVLNQITELVGRIHDGLWRGYSEKPITDVVNIGIGGSFLGPELVSEALLPYAQRGVRCHYLANIDGSEFHELSANLRAETTLFIVSSKSFNTLETLKNAMAARTWYLAQGGSEAELYRHFIAVSSNKAAAVAFGIREENIFPMWDWVGGRYSLWSAIGLPIALAIGTANFKELLSGAYTMDQHFQTAPFDKNMPVLLALLGVWYGNFWGANSHAILPYDHYLRNITKHLQQLDMESNGKSVLQDGTPVKTDTGPVIWGGVGCNGQHAYHQLLHQGTQLIPADFIVPVVSFNPVADHHQWLYANCLSQSQALMLGKTREEAEAELRGKGLNEADIEKLAPHKVIPGNRPSNTLVVERISPRRLGALVAMYEHKVFVQSVIWGINAFDQWGVELGKELGKGVYQRLVGSLEESAEDGSTQGLINYFRGRHRG.

Glu359 acts as the Proton donor in catalysis. Residues His390 and Lys518 contribute to the active site.

This sequence belongs to the GPI family.

Its subcellular location is the cytoplasm. It carries out the reaction alpha-D-glucose 6-phosphate = beta-D-fructose 6-phosphate. The protein operates within carbohydrate biosynthesis; gluconeogenesis. It functions in the pathway carbohydrate degradation; glycolysis; D-glyceraldehyde 3-phosphate and glycerone phosphate from D-glucose: step 2/4. Its function is as follows. Catalyzes the reversible isomerization of glucose-6-phosphate to fructose-6-phosphate. The protein is Glucose-6-phosphate isomerase of Pseudomonas putida (strain GB-1).